Consider the following 137-residue polypeptide: Large ribosomal subunit protein uL16c (137 aa).

Positions 1 to 17 (MLSPKKTRFRRQHRGRM) are enriched in basic residues. The segment at 1-21 (MLSPKKTRFRRQHRGRMKGLS) is disordered.

It belongs to the universal ribosomal protein uL16 family. In terms of assembly, part of the 50S ribosomal subunit.

The protein resides in the plastid. The protein is Large ribosomal subunit protein uL16c of Cuscuta obtusiflora (Peruvian dodder).